An 80-amino-acid polypeptide reads, in one-letter code: Translation initiation factor IF-1 (80 aa).

Positions 6 to 80 (EKKKKDESDS…TSRGRIVYRR (75 aa)) constitute an S1-like domain.

The protein belongs to the IF-1 family. In terms of assembly, component of the 30S ribosomal translation pre-initiation complex which assembles on the 30S ribosome in the order IF-2 and IF-3, IF-1 and N-formylmethionyl-tRNA(fMet); mRNA recruitment can occur at any time during PIC assembly.

The protein localises to the cytoplasm. Functionally, one of the essential components for the initiation of protein synthesis. Stabilizes the binding of IF-2 and IF-3 on the 30S subunit to which N-formylmethionyl-tRNA(fMet) subsequently binds. Helps modulate mRNA selection, yielding the 30S pre-initiation complex (PIC). Upon addition of the 50S ribosomal subunit IF-1, IF-2 and IF-3 are released leaving the mature 70S translation initiation complex. The polypeptide is Translation initiation factor IF-1 (Deinococcus radiodurans (strain ATCC 13939 / DSM 20539 / JCM 16871 / CCUG 27074 / LMG 4051 / NBRC 15346 / NCIMB 9279 / VKM B-1422 / R1)).